The following is a 232-amino-acid chain: Cell surface superoxide dismutase [Cu-Zn] 4 (232 aa).

The signal sequence occupies residues 1 to 15 (MKYLSIISIVALALA). A glycan (N-linked (GlcNAc...) asparagine) is linked at N53. 2 residues coordinate Cu cation: H75 and H77. N86 carries an N-linked (GlcNAc...) asparagine glycan. H93 lines the Cu cation pocket. H93 is a Zn(2+) binding site. The N-linked (GlcNAc...) asparagine glycan is linked to N98. D113 contacts Zn(2+). An N-linked (GlcNAc...) asparagine glycan is attached at N120. Cu cation is bound at residue H153. N156, N164, N182, N193, and N196 each carry an N-linked (GlcNAc...) asparagine glycan. Over residues 174–208 (TASAATWSNSSSSSSSSSKNSTNGSSGSSTSASQG) the composition is skewed to low complexity. The tract at residues 174-211 (TASAATWSNSSSSSSSSSKNSTNGSSGSSTSASQGSGA) is disordered. Residue S209 is the site of GPI-anchor amidated serine attachment. Positions 210–232 (GAGRAEISGFLAAGIAGVVAALI) are cleaved as a propeptide — removed in mature form. Substrate is bound at residue R213.

This sequence belongs to the Cu-Zn superoxide dismutase family. Requires Cu cation as cofactor. Zn(2+) is required as a cofactor. In terms of processing, the GPI-anchor is attached to the protein in the endoplasmic reticulum and serves to target the protein to the cell surface. There, the glucosamine-inositol phospholipid moiety is cleaved off and the GPI-modified mannoprotein is covalently attached via its lipidless GPI glycan remnant to the 1,6-beta-glucan of the outer cell wall layer.

It is found in the secreted. Its subcellular location is the cell wall. The protein localises to the membrane. It carries out the reaction 2 superoxide + 2 H(+) = H2O2 + O2. Functionally, superoxide dismutases serve to convert damaging superoxide radicals, a key form of ROS, to less damaging hydrogen peroxide that can be converted into water by catalase action. Degrades host-derived reactive oxygen species to escape innate immune surveillance. Involved in the occurrence of miconazole-tolerant persisters in biofilms. Persisters are cells that survive high doses of an antimicrobial agent. The chain is Cell surface superoxide dismutase [Cu-Zn] 4 (SOD4) from Candida albicans (strain SC5314 / ATCC MYA-2876) (Yeast).